Consider the following 1017-residue polypeptide: Formin-binding protein 4 (1017 aa).

2 disordered regions span residues 1–141 (MGKK…STDI) and 160–202 (PAAP…TSGW). The residue at position 18 (S18) is a Phosphoserine. Residues 40–69 (DSTAAVPSQPAPSAATTTTTAVTAAAASDD) show a composition bias toward low complexity. Residues S116 and S124 each carry the phosphoserine modification. The span at 130–141 (SKETNGNQSTDI) shows a compositional bias: polar residues. Phosphothreonine is present on T172. Residues 181–200 (AATSTLSSSTSNGTDSTQTS) show a composition bias toward low complexity. The WW 1 domain maps to 214–248 (GIEMGDWQEVWDENTGCYYYWNTQTNEVTWELPQY). K290 carries the N6-acetyllysine modification. K301 is covalently cross-linked (Glycyl lysine isopeptide (Lys-Gly) (interchain with G-Cter in SUMO1)). Residue K335 forms a Glycyl lysine isopeptide (Lys-Gly) (interchain with G-Cter in SUMO2) linkage. K348 participates in a covalent cross-link: Glycyl lysine isopeptide (Lys-Gly) (interchain with G-Cter in SUMO1); alternate. K348 participates in a covalent cross-link: Glycyl lysine isopeptide (Lys-Gly) (interchain with G-Cter in SUMO2); alternate. Disordered stretches follow at residues 421–519 (LEEG…TTPK), 621–676 (ESQW…CKES), 706–792 (PLPL…IKRK), and 899–994 (TATI…AERN). S427, S432, S435, S438, and S442 each carry phosphoserine. Polar residues predominate over residues 428 to 442 (VSGSSPRSDISQPAS). Positions 449 to 458 (LMSKRGKWKM) are enriched in basic residues. A compositionally biased stretch (low complexity) spans 461–474 (RATSPESTSRSSSK). Phosphoserine is present on S464. T479 bears the Phosphothreonine mark. The span at 491 to 513 (NSEKIDENSDKEMEVEESPEKIK) shows a compositional bias: basic and acidic residues. Residues S499 and S508 each carry the phosphoserine modification. T516 and T517 each carry phosphothreonine. K519 is covalently cross-linked (Glycyl lysine isopeptide (Lys-Gly) (interchain with G-Cter in SUMO1); alternate). Residue K519 forms a Glycyl lysine isopeptide (Lys-Gly) (interchain with G-Cter in SUMO2); alternate linkage. One can recognise a WW 2 domain in the interval 595 to 629 (NATPKGWSCHWDRDHRRYFYVNEQSGESQWEFPDG). Positions 627-637 (PDGEEEEEESQ) are enriched in acidic residues. Basic and acidic residues predominate over residues 640–656 (ENRDETLAKQTLKDKTG). The span at 657–671 (TDSNSTESSETSTGS) shows a compositional bias: low complexity. Over residues 706–732 (PLPLEMPPPPPPPPESPPPPPPPPPPA) the composition is skewed to pro residues. Residues 733–748 (EDGEIQEVEMEDEGSE) are compositionally biased toward acidic residues. The span at 764 to 786 (SAQTTVVTSQSSVDSTISSSSST) shows a compositional bias: low complexity. Residues 904-925 (EPPPPPPPPPPPPPPAPKMPPP) are compositionally biased toward pro residues. A compositionally biased stretch (basic residues) spans 929-941 (KKGRKDKAKKSKT). Over residues 957 to 970 (LDEEDNSSSSEEDR) the composition is skewed to acidic residues. A phosphoserine mark is found at S963, S964, and S965. A compositionally biased stretch (basic and acidic residues) spans 971–982 (ESTAQKRIEEWK).

As to quaternary structure, binds FMN1. Interacts with the Arg/Gly-rich-flanked Pro-rich of KHDRBS1/SAM68. Arginine methylation in these regions has no effect on this binding. Highly expressed in the eye.

This Homo sapiens (Human) protein is Formin-binding protein 4 (FNBP4).